The sequence spans 55 residues: Large ribosomal subunit protein bL33 (55 aa).

The protein belongs to the bacterial ribosomal protein bL33 family.

In Renibacterium salmoninarum (strain ATCC 33209 / DSM 20767 / JCM 11484 / NBRC 15589 / NCIMB 2235), this protein is Large ribosomal subunit protein bL33.